Here is a 222-residue protein sequence, read N- to C-terminus: MALPNQQNVDLPTFKLLIVGDGGTGKTTFLKRHLTGEFEHNTEPTLGVDIYPLDFFTNRGKIRFECWDTAGQEKYSGLKDAYYIHGQCAIIMFDVTARHTYMNIDRWYRDLRRVCKNIPIVLCGNKVDVPSRQIKPKHVSYHRKKCLQYYEMSAKNNCNFEKPFLYLARRIAGDAKLSFVESPEAQIDNLDVESLQLLTVEAGTQPLLMTRISFEFNTLSIE.

The region spanning 10–174 (DLPTFKLLIV…LYLARRIAGD (165 aa)) is the Small GTPase Ran-type domain. Position 21–28 (21–28 (DGGTGKTT)) interacts with GTP. The tract at residues 40-48 (HNTEPTLGV) is switch-I. GTP is bound by residues Gly71, 125 to 128 (NKVD), and 153 to 155 (SAK). Residues 71 to 87 (GQEKYSGLKDAYYIHGQ) form a switch-II region.

The protein belongs to the small GTPase superfamily. Ran family. In terms of assembly, found in a nuclear export complex with RanGTP, exportin and pre-miRNA.

It is found in the nucleus. GTP-binding protein involved in nucleocytoplasmic transport. Required for the import of protein into the nucleus and also for RNA export. Involved in chromatin condensation and control of cell cycle. This chain is GTP-binding nuclear protein Ran-4 (RAN4), found in Arabidopsis thaliana (Mouse-ear cress).